Consider the following 54-residue polypeptide: Small, acid-soluble spore protein gamma-type (54 aa).

Residues Met-1–Gln-54 form a disordered region. 2 stretches are compositionally biased toward low complexity: residues Gln-10–Gln-21 and Ala-29–Ala-44. Basic residues predominate over residues Ala-45–Gln-54.

The protein belongs to the gamma-type SASP family.

In terms of biological role, SASP are proteins degraded in the first minutes of spore germination and provide amino acids for both new protein synthesis and metabolism. These proteins may be involved in dormant spore's high resistance to UV light. This chain is Small, acid-soluble spore protein gamma-type (sspA), found in Alkalihalophilus pseudofirmus (strain ATCC BAA-2126 / JCM 17055 / OF4) (Bacillus pseudofirmus).